Reading from the N-terminus, the 196-residue chain is NADH dehydrogenase [ubiquinone] 1 alpha subcomplex assembly factor 3 (196 aa).

Residues 1–93 (MIARTLRTVG…RSVLSWNVNS (93 aa)) constitute a mitochondrion transit peptide.

The protein belongs to the NDUFAF3 family. As to quaternary structure, together with NdufAF4 associates with mitochondrial complex I assembly intermediates during its biogenesis.

It localises to the mitochondrion. Its function is as follows. Involved in the assembly of mitochondrial NADH:ubiquinone oxidoreductase complex (complex I). Together with NdufAF4, involved in biogenesis of complex 1 modules N, Q and P-peripheral, but not the P-distal module. Required for recruitment of the complex I assembly factor Timmdc1 to complex 1 assembly intermediates. The polypeptide is NADH dehydrogenase [ubiquinone] 1 alpha subcomplex assembly factor 3 (Drosophila melanogaster (Fruit fly)).